A 760-amino-acid chain; its full sequence is uncharacterized protein (760 aa).

An N-terminal signal peptide occupies residues 1-23; the sequence is MVIKKGFFALSSCTLGLGLILTA. Cys-24 carries N-palmitoyl cysteine lipidation. Cys-24 carries S-diacylglycerol cysteine lipidation. Disordered stretches follow at residues 220–262 and 443–482; these read ANGK…NSDN and YEIK…NQTS. Polar residues-rich tracts occupy residues 222–257 and 448–472; these read GKTT…SQDA and PTNS…GKEQ.

It belongs to the MG185/MG260 family.

It is found in the cell membrane. This is an uncharacterized protein from Mycoplasma pneumoniae (strain ATCC 29342 / M129 / Subtype 1) (Mycoplasmoides pneumoniae).